Consider the following 136-residue polypeptide: Probable endoribonuclease MazF7 (136 aa).

The tract at residues 115 to 136 (TGPERGEAATHSPVRWTGGRDP) is disordered.

This sequence belongs to the PemK/MazF family. As to quaternary structure, forms a complex with cognate antitoxin MazE7.

Toxic component of a type II toxin-antitoxin (TA) system. Upon expression in E.coli and M.smegmatis inhibits cell growth and colony formation. Its toxic effect is neutralized by coexpression with cognate antitoxin MazE7. Probably an endoribonuclease. This chain is Probable endoribonuclease MazF7 (mazF7), found in Mycobacterium tuberculosis (strain ATCC 25618 / H37Rv).